A 353-amino-acid chain; its full sequence is Mitochondrial ubiquitin ligase activator of nfkb 1 (353 aa).

Residues methionine 1–serine 8 lie on the Cytoplasmic side of the membrane. A helical membrane pass occupies residues valine 9–tyrosine 29. The Mitochondrial intermembrane portion of the chain corresponds to arginine 30–arginine 239. The chain crosses the membrane as a helical span at residues tryptophan 240–leucine 260. Topologically, residues arginine 261–serine 353 are cytoplasmic. The RING-type zinc finger occupies cysteine 303 to arginine 341.

As to quaternary structure, homooligomer.

The protein localises to the mitochondrion outer membrane. The enzyme catalyses S-ubiquitinyl-[E2 ubiquitin-conjugating enzyme]-L-cysteine + [acceptor protein]-L-lysine = [E2 ubiquitin-conjugating enzyme]-L-cysteine + N(6)-ubiquitinyl-[acceptor protein]-L-lysine.. It functions in the pathway protein modification; protein ubiquitination. E3 ubiquitin-protein ligase that plays a role in the control of mitochondrial morphology. Promotes mitochondrial fragmentation and influences mitochondrial localization. Inhibits cell growth. E3 ubiquitin ligases accept ubiquitin from an E2 ubiquitin-conjugating enzyme in the form of a thioester and then directly transfer the ubiquitin to targeted substrates. The sequence is that of Mitochondrial ubiquitin ligase activator of nfkb 1 (mul1) from Xenopus laevis (African clawed frog).